We begin with the raw amino-acid sequence, 937 residues long: AP-2 complex subunit beta (937 aa).

Position 2 is an N-acetylthreonine (Thr-2). Ser-4 is subject to Phosphoserine. Residue Lys-265 is modified to N6-acetyllysine. The disordered stretch occupies residues 593 to 617 (LPIHHGSTDAGDSPVGTTTTTNLEQ). Residues 607–617 (VGTTTTTNLEQ) show a composition bias toward polar residues. Residues Tyr-737 and Tyr-928 each carry the phosphotyrosine modification.

The protein belongs to the adaptor complexes large subunit family. In terms of assembly, adaptor protein complex 2 (AP-2) is a heterotetramer composed of two large adaptins (alpha-type subunit AP2A1 or AP2A2 and beta-type subunit AP2B1), a medium adaptin (mu-type subunit AP2M1) and a small adaptin (sigma-type subunit AP2S1). Interacts with EPN1. Interacts with EPS15; clathrin competes with EPS15. Interacts with SNAP91; clathrin competes with SNAP91. Interacts with CLTC; clathrin competes with EPS15, SNAP91 and PIP5K1C. Interacts with LDLRAP1. Interacts with AMPH and BIN1. Interacts with ARF6 (GDP-bound). Interacts (dephosphorylated at Tyr-737) with ARRB1; phosphorylation of AP2B1 at Tyr-737 disrupts the interaction. Interacts with SLC2A8. Interacts with SCYL1 and SCYL2. Interacts with TGFBR1 and TGFBR2. Interacts with PIP5K1C; clathrin competes with PIP5K1C. Interacts with DENND1B. Interacts with FCHO1. Interacts with RFTN1. Interacts with KIAA1107. Together with AP2A1 or AP2A2 and AP2M1, it interacts with ADAM10; this interaction facilitates ADAM10 endocytosis from the plasma membrane during long-term potentiation in hippocampal neurons. In terms of tissue distribution, expressed in the brain (at protein level).

It is found in the cell membrane. The protein localises to the membrane. It localises to the coated pit. Functionally, component of the adaptor protein complex 2 (AP-2). Adaptor protein complexes function in protein transport via transport vesicles in different membrane traffic pathways. Adaptor protein complexes are vesicle coat components and appear to be involved in cargo selection and vesicle formation. AP-2 is involved in clathrin-dependent endocytosis in which cargo proteins are incorporated into vesicles surrounded by clathrin (clathrin-coated vesicles, CCVs) which are destined for fusion with the early endosome. The clathrin lattice serves as a mechanical scaffold but is itself unable to bind directly to membrane components. Clathrin-associated adaptor protein (AP) complexes which can bind directly to both the clathrin lattice and to the lipid and protein components of membranes are considered to be the major clathrin adaptors contributing the CCV formation. AP-2 also serves as a cargo receptor to selectively sort the membrane proteins involved in receptor-mediated endocytosis. AP-2 seems to play a role in the recycling of synaptic vesicle membranes from the presynaptic surface. AP-2 recognizes Y-X-X-[FILMV] (Y-X-X-Phi) and [ED]-X-X-X-L-[LI] endocytosis signal motifs within the cytosolic tails of transmembrane cargo molecules. AP-2 may also play a role in maintaining normal post-endocytic trafficking through the ARF6-regulated, non-clathrin pathway. During long-term potentiation in hippocampal neurons, AP-2 is responsible for the endocytosis of ADAM10. The AP-2 beta subunit acts via its C-terminal appendage domain as a scaffolding platform for endocytic accessory proteins; at least some clathrin-associated sorting proteins (CLASPs) are recognized by their [DE]-X(1,2)-F-X-X-[FL]-X-X-X-R motif. The AP-2 beta subunit binds to clathrin heavy chain, promoting clathrin lattice assembly; clathrin displaces at least some CLASPs from AP2B1 which probably then can be positioned for further coat assembly. This is AP-2 complex subunit beta (Ap2b1) from Mus musculus (Mouse).